A 180-amino-acid chain; its full sequence is Sec-independent protein translocase protein TatB (180 aa).

The chain crosses the membrane as a helical span at residues 1–21 (MFDIGWSELLVIGVVALIAIG). Positions 77–180 (TRGDLMTRLT…DQTARGAKAS (104 aa)) are disordered. Over residues 105–129 (ADKPSVSSDAASASGSAAPEAGAAE) the composition is skewed to low complexity.

It belongs to the TatB family. The Tat system comprises two distinct complexes: a TatABC complex, containing multiple copies of TatA, TatB and TatC subunits, and a separate TatA complex, containing only TatA subunits. Substrates initially bind to the TatABC complex, which probably triggers association of the separate TatA complex to form the active translocon.

The protein resides in the cell inner membrane. Part of the twin-arginine translocation (Tat) system that transports large folded proteins containing a characteristic twin-arginine motif in their signal peptide across membranes. Together with TatC, TatB is part of a receptor directly interacting with Tat signal peptides. TatB may form an oligomeric binding site that transiently accommodates folded Tat precursor proteins before their translocation. The chain is Sec-independent protein translocase protein TatB from Nitrobacter winogradskyi (strain ATCC 25391 / DSM 10237 / CIP 104748 / NCIMB 11846 / Nb-255).